The primary structure comprises 95 residues: Integration host factor subunit beta (95 aa).

It belongs to the bacterial histone-like protein family. In terms of assembly, heterodimer of an alpha and a beta chain.

Its function is as follows. This protein is one of the two subunits of integration host factor, a specific DNA-binding protein that functions in genetic recombination as well as in transcriptional and translational control. This Shewanella halifaxensis (strain HAW-EB4) protein is Integration host factor subunit beta.